The sequence spans 425 residues: Serine--tRNA ligase (425 aa).

Residue 231–233 participates in L-serine binding; the sequence is TAE. 262–264 serves as a coordination point for ATP; the sequence is RSE. Glutamate 285 lines the L-serine pocket. Residue 349-352 coordinates ATP; that stretch reads EISS. Residue serine 385 coordinates L-serine.

This sequence belongs to the class-II aminoacyl-tRNA synthetase family. Type-1 seryl-tRNA synthetase subfamily. Homodimer. The tRNA molecule binds across the dimer.

The protein localises to the cytoplasm. It catalyses the reaction tRNA(Ser) + L-serine + ATP = L-seryl-tRNA(Ser) + AMP + diphosphate + H(+). The enzyme catalyses tRNA(Sec) + L-serine + ATP = L-seryl-tRNA(Sec) + AMP + diphosphate + H(+). It functions in the pathway aminoacyl-tRNA biosynthesis; selenocysteinyl-tRNA(Sec) biosynthesis; L-seryl-tRNA(Sec) from L-serine and tRNA(Sec): step 1/1. Functionally, catalyzes the attachment of serine to tRNA(Ser). Is also able to aminoacylate tRNA(Sec) with serine, to form the misacylated tRNA L-seryl-tRNA(Sec), which will be further converted into selenocysteinyl-tRNA(Sec). The protein is Serine--tRNA ligase of Halalkalibacterium halodurans (strain ATCC BAA-125 / DSM 18197 / FERM 7344 / JCM 9153 / C-125) (Bacillus halodurans).